Consider the following 366-residue polypeptide: Transcription factor bHLH74 (366 aa).

Gly residues predominate over residues methionine 1–methionine 11. Disordered stretches follow at residues methionine 1–serine 20 and glycine 123–glutamate 201. Composition is skewed to basic and acidic residues over residues glycine 123–serine 134 and lysine 159–arginine 170. One can recognise a bHLH domain in the interval glutamine 212–leucine 262.

As to quaternary structure, homodimer. Interacts with IBH1. Binds reversibly to CRY2 after blue light illumination. In terms of tissue distribution, expressed constitutively in roots, leaves, stems, and flowers.

It localises to the nucleus. Transcriptional activator involved in cell elongation. Regulates the expression of a subset of genes involved in cell expansion by binding to the G-box motif. Binds to chromatin DNA of the FT gene and promotes its expression, and thus triggers flowering in response to blue light. In Arabidopsis thaliana (Mouse-ear cress), this protein is Transcription factor bHLH74 (BHLH74).